A 570-amino-acid chain; its full sequence is Sulfite reductase [NADPH] hemoprotein beta-component (570 aa).

[4Fe-4S] cluster is bound by residues Cys-434, Cys-440, Cys-479, and Cys-483. A siroheme-binding site is contributed by Cys-483.

It belongs to the nitrite and sulfite reductase 4Fe-4S domain family. As to quaternary structure, alpha(8)-beta(8). The alpha component is a flavoprotein, the beta component is a hemoprotein. Siroheme serves as cofactor. The cofactor is [4Fe-4S] cluster.

The enzyme catalyses hydrogen sulfide + 3 NADP(+) + 3 H2O = sulfite + 3 NADPH + 4 H(+). Its pathway is sulfur metabolism; hydrogen sulfide biosynthesis; hydrogen sulfide from sulfite (NADPH route): step 1/1. Its function is as follows. Component of the sulfite reductase complex that catalyzes the 6-electron reduction of sulfite to sulfide. This is one of several activities required for the biosynthesis of L-cysteine from sulfate. The protein is Sulfite reductase [NADPH] hemoprotein beta-component of Salmonella schwarzengrund (strain CVM19633).